A 331-amino-acid chain; its full sequence is Small ribosomal subunit protein uS2 (331 aa).

It belongs to the universal ribosomal protein uS2 family.

The protein is Small ribosomal subunit protein uS2 of Bradyrhizobium diazoefficiens (strain JCM 10833 / BCRC 13528 / IAM 13628 / NBRC 14792 / USDA 110).